The chain runs to 491 residues: HEPACAM family member 2 (491 aa).

Positions Met1–Ser18 are cleaved as a signal peptide. Residues Asn73, Asn117, and Asn153 are each glycosylated (N-linked (GlcNAc...) asparagine). 2 Ig-like C2-type domains span residues Pro137 to Ile221 and Pro223 to Thr319. 2 disulfides stabilise this stretch: Cys158–Cys207 and Cys258–Cys303. Asn308 carries an N-linked (GlcNAc...) asparagine glycan. A helical membrane pass occupies residues Leu340–Trp360. At Lys361–Ile491 the chain is on the cytoplasmic side. Residues Gln444 to Gln454 show a composition bias toward polar residues. Disordered stretches follow at residues Gln444 to Asp466 and Glu472 to Ile491. Positions Glu472–Gly482 are enriched in basic and acidic residues.

In terms of processing, poly-ADP-ribosylated (PARsylated) by tankyrase TNKS during late G2 and prophase, leading to translocation to mitotic centrosomes. Post-translationally, N-glycosylated.

Its subcellular location is the golgi apparatus membrane. It is found in the cytoplasm. It localises to the cytoskeleton. The protein resides in the spindle. The protein localises to the microtubule organizing center. Its subcellular location is the centrosome. It is found in the midbody. Functionally, required during prometaphase for centrosome maturation. Following poly-ADP-ribosylation (PARsylation) by TNKS, translocates from the Golgi apparatus to mitotic centrosomes and plays a key role in the formation of robust microtubules for prompt movement of chromosomes: anchors AKAP9/CG-NAP, a scaffold protein of the gamma-tubulin ring complex and promotes centrosome maturation. The protein is HEPACAM family member 2 (HEPACAM2) of Bos taurus (Bovine).